The primary structure comprises 134 residues: Iron-sulfur cluster insertion protein ErpA (134 aa).

The iron-sulfur cluster site is built by Cys-47, Cys-126, and Cys-128.

Belongs to the HesB/IscA family. As to quaternary structure, homodimer. It depends on iron-sulfur cluster as a cofactor.

Functionally, required for insertion of 4Fe-4S clusters for at least IspG. The protein is Iron-sulfur cluster insertion protein ErpA of Coxiella burnetii (strain Dugway 5J108-111).